A 24-amino-acid polypeptide reads, in one-letter code: Humanin (24 aa).

The segment at 1–12 (MAPRGFSCLLLL) is sufficient to interact with BID and BIM and to suppress BID and BIM activity. The sufficient for neuroprotective activity stretch occupies residues 3-19 (PRGFSCLLLLTSEIDLP). The segment at 5-12 (GFSCLLLL) is sufficient to interact with MPP8. Required for secretion regions lie at residues 9 to 11 (LLL) and 19 to 20 (PV).

In terms of assembly, homodimer. Interacts with amyloid-beta protein 42 (Abeta42); the interaction prevents Abeta42 fibril formation. Interacts with BAX; forms fibers with BAX which results in BAX conformational changes and sequestering of BAX into the fibers, preventing BAX activation. Interacts with both full-length BID and cleaved BID p15; forms fibers with BID which results in BID conformational changes and sequestering of BID into the fibers, preventing BID activation. Interacts with BIM isoform BimEL but not with BIM isoforms BimL or BimS; the interaction prevents BIM-induced apoptosis. Interacts with IGFBP3; competes with importin KPNB1 for binding to IGFBP3, blocking IGFBP3 nuclear import. Interacts with TRIM11. Interacts with MPP8. As to expression, expressed in testis, seminal plasma and sperm (at protein level). Higher seminal plasma levels are associated with normospermia than with oligospermia, asthenospermia or oligoasthenospermia (at protein level). Higher sperm levels are associated with normospermia than with asthenospermia (at protein level). Expressed in retinal epithelial cells (at protein level). Expressed in the heart, skeletal muscle, kidney and liver. Lesser but significant expression is observed in the brain and the gastrointestinal tract. Expressed in the AD brain, where it is found in some of the large intact neurons of the occipital lobes and small and round reactive glial cells in the hippocampus.

The protein localises to the secreted. It localises to the cytoplasm. Its subcellular location is the cell projection. It is found in the cilium. The protein resides in the flagellum. The protein localises to the nucleus. It localises to the mitochondrion. Its function is as follows. Plays a role as a neuroprotective factor. Protects against neuronal cell death induced by multiple different familial Alzheimer disease genes and amyloid-beta proteins in Alzheimer disease. Mediates its neuroprotective effect by interacting with a receptor complex composed of IL6ST/GP130, IL27RA/WSX1 and CNTFR. Also acts as a ligand for G-protein coupled receptors FPR2/FPRL1 and FPR3/FPRL2. Inhibits amyloid-beta protein 40 fibril formation. Also inhibits amyloid-beta protein 42 fibril formation. Suppresses apoptosis by binding to BAX and preventing the translocation of BAX from the cytosol to mitochondria. Also suppresses apoptosis by binding to BID and inhibiting the interaction of BID with BAX and BAK which prevents oligomerization of BAX and BAK and suppresses release of apoptogenic proteins from mitochondria. Forms fibers with BAX and also with BID, inducing BAX and BID conformational changes and sequestering them into the fibers which prevents their activation. Can also suppress apoptosis by interacting with BIM isoform BimEL, inhibiting BimEL-induced activation of BAX, blocking oligomerization of BAX and BAK, and preventing release of apoptogenic proteins from mitochondria. Plays a role in up-regulation of anti-apoptotic protein BIRC6/APOLLON, leading to inhibition of neuronal cell death. Binds to IGFBP3 and specifically blocks IGFBP3-induced cell death. Competes with importin KPNB1 for binding to IGFBP3 which is likely to block IGFBP3 nuclear import. Induces chemotaxis of mononuclear phagocytes via FPR2/FPRL1. Reduces aggregation and fibrillary formation by suppressing the effect of APP on mononuclear phagocytes and acts by competitively inhibiting the access of FPR2 to APP. Protects retinal pigment epithelium (RPE) cells against oxidative stress-induced and endoplasmic reticulum (ER) stress-induced apoptosis. Promotes mitochondrial biogenesis in RPE cells following oxidative stress and promotes STAT3 phosphorylation which leads to inhibition of CASP3 release. Also reduces CASP4 levels in RPE cells, suppresses ER stress-induced mitochondrial superoxide production and plays a role in up-regulation of mitochondrial glutathione. Reduces testicular hormone deprivation-induced apoptosis of germ cells at the nonandrogen-sensitive stages of the seminiferous epithelium cycle. Protects endothelial cells against free fatty acid-induced inflammation by suppressing oxidative stress, reducing expression of TXNIP and inhibiting activation of the NLRP3 inflammasome which inhibits expression of pro-inflammatory cytokines IL1B and IL18. Protects against high glucose-induced endothelial cell dysfunction by mediating activation of ERK5 which leads to increased expression of transcription factor KLF2 and prevents monocyte adhesion to endothelial cells. Inhibits the inflammatory response in astrocytes. Increases the expression of PPARGC1A/PGC1A in pancreatic beta cells which promotes mitochondrial biogenesis. Increases insulin sensitivity. This is Humanin from Homo sapiens (Human).